The primary structure comprises 362 residues: Phosphoserine aminotransferase (362 aa).

Position 43 (Arg-43) interacts with L-glutamate. Residues 77–78 (AS), Trp-103, Thr-153, Asp-173, and Gln-196 each bind pyridoxal 5'-phosphate. Lys-197 bears the N6-(pyridoxal phosphate)lysine mark. 238–239 (NT) serves as a coordination point for pyridoxal 5'-phosphate.

This sequence belongs to the class-V pyridoxal-phosphate-dependent aminotransferase family. SerC subfamily. As to quaternary structure, homodimer. Requires pyridoxal 5'-phosphate as cofactor.

Its subcellular location is the cytoplasm. The enzyme catalyses O-phospho-L-serine + 2-oxoglutarate = 3-phosphooxypyruvate + L-glutamate. It carries out the reaction 4-(phosphooxy)-L-threonine + 2-oxoglutarate = (R)-3-hydroxy-2-oxo-4-phosphooxybutanoate + L-glutamate. It participates in amino-acid biosynthesis; L-serine biosynthesis; L-serine from 3-phospho-D-glycerate: step 2/3. It functions in the pathway cofactor biosynthesis; pyridoxine 5'-phosphate biosynthesis; pyridoxine 5'-phosphate from D-erythrose 4-phosphate: step 3/5. Functionally, catalyzes the reversible conversion of 3-phosphohydroxypyruvate to phosphoserine and of 3-hydroxy-2-oxo-4-phosphonooxybutanoate to phosphohydroxythreonine. The protein is Phosphoserine aminotransferase (serC) of Niallia circulans (Bacillus circulans).